A 168-amino-acid chain; its full sequence is Nicotinamide-nucleotide adenylyltransferase (168 aa).

Arg-8, Phe-9, His-13, His-16, Phe-119, Arg-121, Tyr-124, Gly-126, Thr-127, and Arg-130 together coordinate ATP.

This sequence belongs to the archaeal NMN adenylyltransferase family. In terms of assembly, homohexamer existing as a trimer of dimers.

Its subcellular location is the cytoplasm. It carries out the reaction beta-nicotinamide D-ribonucleotide + ATP + H(+) = diphosphate + NAD(+). It participates in cofactor biosynthesis; NAD(+) biosynthesis; NAD(+) from nicotinamide D-ribonucleotide: step 1/1. Its function is as follows. Catalyzes the formation of NAD(+) from nicotinamide mononucleotide (NMN) and ATP. This is Nicotinamide-nucleotide adenylyltransferase from Methanocaldococcus jannaschii (strain ATCC 43067 / DSM 2661 / JAL-1 / JCM 10045 / NBRC 100440) (Methanococcus jannaschii).